A 142-amino-acid polypeptide reads, in one-letter code: MSTQVAKKSEVKKNWYIVDLDGKVLGRAATEIARVLRGKHKAIYSPSVDTGDFVVVVNAEKVKLTGNKMSAKMYYRHSGYPGGLRQANAAQMLEKKPEDLIKKAVKGMLPKNKLGRDMFRKLKVYTGSDHPHAAQQPLELNI.

It belongs to the universal ribosomal protein uL13 family. Part of the 50S ribosomal subunit.

Functionally, this protein is one of the early assembly proteins of the 50S ribosomal subunit, although it is not seen to bind rRNA by itself. It is important during the early stages of 50S assembly. The sequence is that of Large ribosomal subunit protein uL13 from Syntrophotalea carbinolica (strain DSM 2380 / NBRC 103641 / GraBd1) (Pelobacter carbinolicus).